A 1174-amino-acid polypeptide reads, in one-letter code: Probable pyruvate-flavodoxin oxidoreductase (1174 aa).

2 consecutive 4Fe-4S ferredoxin-type domains span residues 680-709 and 736-765; these read EIPI…AKVV and YVLQ…NPEI. Residues Cys-689, Cys-692, Cys-695, Cys-699, Cys-745, Cys-748, Cys-751, Cys-755, Cys-819, Cys-822, Cys-847, and Cys-1071 each contribute to the [4Fe-4S] cluster site.

The protein belongs to the pyruvate:ferredoxin/flavodoxin oxidoreductase family. [4Fe-4S] cluster serves as cofactor.

It catalyses the reaction oxidized [flavodoxin] + pyruvate + CoA + 2 H(+) = reduced [flavodoxin] + acetyl-CoA + CO2. Its function is as follows. Oxidoreductase required for the transfer of electrons from pyruvate to flavodoxin. This chain is Probable pyruvate-flavodoxin oxidoreductase (ydbK), found in Escherichia coli (strain K12).